A 181-amino-acid polypeptide reads, in one-letter code: Negative modulator of initiation of replication (181 aa).

Interaction with DNA regions lie at residues 87 to 88 (AV), 116 to 120 (RTRVY), and 150 to 156 (NTNTGRK).

The protein belongs to the SeqA family. As to quaternary structure, homodimer. Polymerizes to form helical filaments.

It localises to the cytoplasm. Functionally, negative regulator of replication initiation, which contributes to regulation of DNA replication and ensures that replication initiation occurs exactly once per chromosome per cell cycle. Binds to pairs of hemimethylated GATC sequences in the oriC region, thus preventing assembly of replication proteins and re-initiation at newly replicated origins. Repression is relieved when the region becomes fully methylated. The sequence is that of Negative modulator of initiation of replication from Shigella flexneri.